A 235-amino-acid chain; its full sequence is 5'-methylthioadenosine/S-adenosylhomocysteine nucleosidase (235 aa).

Glu-13 acts as the Proton acceptor in catalysis. Residues Gly-79, Met-154, and 175–176 (ME) each bind substrate. Residue Asp-199 is the Proton donor of the active site.

It belongs to the PNP/UDP phosphorylase family. MtnN subfamily.

The catalysed reaction is S-adenosyl-L-homocysteine + H2O = S-(5-deoxy-D-ribos-5-yl)-L-homocysteine + adenine. It catalyses the reaction S-methyl-5'-thioadenosine + H2O = 5-(methylsulfanyl)-D-ribose + adenine. It carries out the reaction 5'-deoxyadenosine + H2O = 5-deoxy-D-ribose + adenine. The protein operates within amino-acid biosynthesis; L-methionine biosynthesis via salvage pathway; S-methyl-5-thio-alpha-D-ribose 1-phosphate from S-methyl-5'-thioadenosine (hydrolase route): step 1/2. Functionally, catalyzes the irreversible cleavage of the glycosidic bond in both 5'-methylthioadenosine (MTA) and S-adenosylhomocysteine (SAH/AdoHcy) to adenine and the corresponding thioribose, 5'-methylthioribose and S-ribosylhomocysteine, respectively. Also cleaves 5'-deoxyadenosine, a toxic by-product of radical S-adenosylmethionine (SAM) enzymes, into 5-deoxyribose and adenine. The protein is 5'-methylthioadenosine/S-adenosylhomocysteine nucleosidase of Chromohalobacter salexigens (strain ATCC BAA-138 / DSM 3043 / CIP 106854 / NCIMB 13768 / 1H11).